The following is a 198-amino-acid chain: COMM domain-containing protein 9 (198 aa).

Ala2 carries the N-acetylalanine modification. The 75-residue stretch at 122–196 (RLVDLDWRVD…RIRDQLSAVA (75 aa)) folds into the COMM domain.

Belongs to the COMM domain-containing protein 9 family. As to quaternary structure, component of the commander complex consisting of the CCC subcomplex and the retriever subcomplex. Component of the CCC (COMMD/CCDC22/CCDC93) subcomplex consisting of COMMD1, COMMD2, COMMD3, COMMD4, COMMD5, COMMD6, COMMD7, COMMD8, COMMD9, COMMD10, CCDC22 and CCDC93; within the complex forms a heterodimer with COMMD7. Interacts with RELB and NFKB1/p105. Interacts with CCDC22, CCDC93, SCNN1B, CUL1. As to expression, ubiquitous.

It localises to the nucleus. It is found in the cytoplasmic vesicle. Functionally, scaffold protein in the commander complex that is essential for endosomal recycling of transmembrane cargos; the commander complex is composed of the CCC subcomplex and the retriever subcomplex. May modulate activity of cullin-RING E3 ubiquitin ligase (CRL) complexes. May down-regulate activation of NF-kappa-B. Modulates Na(+) transport in epithelial cells by regulation of apical cell surface expression of amiloride-sensitive sodium channel (ENaC) subunits. This is COMM domain-containing protein 9 (COMMD9) from Homo sapiens (Human).